A 394-amino-acid chain; its full sequence is Elongation factor Tu 2 (394 aa).

One can recognise a tr-type G domain in the interval 10–204 (KPHVNVGTIG…ALDSYIPEPE (195 aa)). The tract at residues 19–26 (GHVDHGKT) is G1. GTP is bound at residue 19–26 (GHVDHGKT). Residue Thr-26 participates in Mg(2+) binding. Positions 60-64 (GITIS) are G2. The G3 stretch occupies residues 81 to 84 (DCPG). GTP is bound by residues 81–85 (DCPGH) and 136–139 (NKCD). Residues 136-139 (NKCD) are G4. Residues 174 to 176 (SAL) form a G5 region.

The protein belongs to the TRAFAC class translation factor GTPase superfamily. Classic translation factor GTPase family. EF-Tu/EF-1A subfamily. As to quaternary structure, monomer.

Its subcellular location is the cytoplasm. It carries out the reaction GTP + H2O = GDP + phosphate + H(+). Its function is as follows. GTP hydrolase that promotes the GTP-dependent binding of aminoacyl-tRNA to the A-site of ribosomes during protein biosynthesis. The protein is Elongation factor Tu 2 of Photorhabdus laumondii subsp. laumondii (strain DSM 15139 / CIP 105565 / TT01) (Photorhabdus luminescens subsp. laumondii).